The primary structure comprises 662 residues: Glycine--tRNA ligase beta subunit (662 aa).

It belongs to the class-II aminoacyl-tRNA synthetase family. Tetramer of two alpha and two beta subunits.

It is found in the cytoplasm. It carries out the reaction tRNA(Gly) + glycine + ATP = glycyl-tRNA(Gly) + AMP + diphosphate. The protein is Glycine--tRNA ligase beta subunit of Rickettsia akari (strain Hartford).